A 246-amino-acid chain; its full sequence is Adenosylcobinamide-GDP ribazoletransferase (246 aa).

6 helical membrane-spanning segments follow: residues 34–54 (IVTFPLVGLLLGAIAGAVALL), 59–79 (CGVPLAALFGVLALALLTGGF), 113–133 (GGLALIFVLVAKVLVIGELLL), 138–158 (PIAALAAACAVGRGMAVLLMY), 171–191 (LFIGKVSLQQTLVTMAMGVAL), and 194–214 (VLLGLQGLRAALITLVLIWGL).

This sequence belongs to the CobS family. Mg(2+) is required as a cofactor.

It localises to the cell inner membrane. It catalyses the reaction alpha-ribazole + adenosylcob(III)inamide-GDP = adenosylcob(III)alamin + GMP + H(+). It carries out the reaction alpha-ribazole 5'-phosphate + adenosylcob(III)inamide-GDP = adenosylcob(III)alamin 5'-phosphate + GMP + H(+). The protein operates within cofactor biosynthesis; adenosylcobalamin biosynthesis; adenosylcobalamin from cob(II)yrinate a,c-diamide: step 7/7. Joins adenosylcobinamide-GDP and alpha-ribazole to generate adenosylcobalamin (Ado-cobalamin). Also synthesizes adenosylcobalamin 5'-phosphate from adenosylcobinamide-GDP and alpha-ribazole 5'-phosphate. The polypeptide is Adenosylcobinamide-GDP ribazoletransferase (Klebsiella pneumoniae (strain 342)).